We begin with the raw amino-acid sequence, 237 residues long: Phosphoribosylaminoimidazole-succinocarboxamide synthase (237 aa).

It belongs to the SAICAR synthetase family.

The enzyme catalyses 5-amino-1-(5-phospho-D-ribosyl)imidazole-4-carboxylate + L-aspartate + ATP = (2S)-2-[5-amino-1-(5-phospho-beta-D-ribosyl)imidazole-4-carboxamido]succinate + ADP + phosphate + 2 H(+). The protein operates within purine metabolism; IMP biosynthesis via de novo pathway; 5-amino-1-(5-phospho-D-ribosyl)imidazole-4-carboxamide from 5-amino-1-(5-phospho-D-ribosyl)imidazole-4-carboxylate: step 1/2. The chain is Phosphoribosylaminoimidazole-succinocarboxamide synthase from Escherichia coli O7:K1 (strain IAI39 / ExPEC).